The sequence spans 81 residues: Photosystem I iron-sulfur center (81 aa).

4Fe-4S ferredoxin-type domains follow at residues 2-31 (VHVV…MVPW) and 39-68 (IASS…IRVY). Positions 11, 14, 17, 21, 48, 51, 54, and 58 each coordinate [4Fe-4S] cluster.

In terms of assembly, the eukaryotic PSI reaction center is composed of at least 11 subunits. [4Fe-4S] cluster serves as cofactor.

It is found in the plastid. It localises to the chloroplast thylakoid membrane. It carries out the reaction reduced [plastocyanin] + hnu + oxidized [2Fe-2S]-[ferredoxin] = oxidized [plastocyanin] + reduced [2Fe-2S]-[ferredoxin]. Functionally, apoprotein for the two 4Fe-4S centers FA and FB of photosystem I (PSI); essential for photochemical activity. FB is the terminal electron acceptor of PSI, donating electrons to ferredoxin. The C-terminus interacts with PsaA/B/D and helps assemble the protein into the PSI complex. Required for binding of PsaD and PsaE to PSI. PSI is a plastocyanin/cytochrome c6-ferredoxin oxidoreductase, converting photonic excitation into a charge separation, which transfers an electron from the donor P700 chlorophyll pair to the spectroscopically characterized acceptors A0, A1, FX, FA and FB in turn. In Cyanidium caldarium (Red alga), this protein is Photosystem I iron-sulfur center.